The sequence spans 1420 residues: MDAYREFIDPSKVNNCVGCNFISSTKKNLIVGKGSLLQIFETIQLKQSTINKPQYRLKLIDQFKLQGTITDLKSIRTIENPNLDYLMVSTKYAKFSIIKWDHHLNTIATVSLHYYEHCIQNSTFEKLAVSELILEPTYNSVSCLRFKNLLCFLPFEVIEDDEDEEEEEEEDEEDEDEGEENIDDTKEKKDKKQSKTDTIEEDKNSTTTNQEPRLFYDSSFIIDATTLDSSIDTVVDMQFLHNYREPTIAVLSSKQEVWAGNLIKSKDNIQFQVLTLDLNLKSTISVFKIDNLPYEIDRIIPLPSPLNGTLLVGCNELIHVDNGGVLKRIAVNKFTRLITASFKSFQDQSDLNLKLENCSVVPIPDDHRVLLILQTGEFYFINFELDGKSIKRIHIDNVDKKTYDKIQLNHPGEVAILDKNMLFIANSNGNSPLIQVRYRDSSKTSDTKESKLNKIEEKEDNKDDDDNDDDDEDDLYKEEEEEETQKTISKSHIEFLYHDELINNGPSSTFTLGICSKEKFKCNLPNPNYNEVSILSNAGTDSQTKLNIITPTIQPSISSSLTFSQVNRMWNLNQKYLITSDDVNYKSEIFQIEKSYARMKSKHFINNELTINMHELNNGKFILQVTPKQIVLYDNKFKKRFTLNDEIKDDEILSSILRDEFLMIFLASGDVMIFVINTYNESYDKIEIPKLLDDTIITTGYITNSYLLSAVSKNVNLLLDNNTSSNKRKRKHSALSNSEGSKKNTGKSQPSTAAPPPPPKVNKVKTFVLVTGDNRIVAFNRFHGEKCYQLNHVDKFTENLSLGFFDPNQSTVDPFIKQIMLNELGDKFDTKDEYLTILTIGGEIYMYKLYFDGENYFFKKEKDLTITGAPDNAFPYGTSIERRLVYFPNLNGFTSIFVTGVIPYLILKTVHSIPRIFQFSKIAAMSISAFSDSKIKNGLIFLDNQQNARICELPLDFNYEFNLPMKHVDIGESIKSIAYHETSDTVVLSTFKQIPYDCLDEEGKPIAGIIKDIKDTPAMSFKGSIKLVSPYNWTVIETIELEDNEVGMTLKSMILDVGSESGSTLGSDPNSLIKKYNKKKREYIVIGIGKYRMEDLAANGIFKIYEIIDIIPEPGKPETNHKFKEIFKEETRGAITSICELSGRFLVSQGQKVIVRDLQDDGTVPVAFLDTPVYVSESKSFGNLLILGDPLKGCWLVGFDAEPFRMIMLGKDTQHISVECADFIINDDEIFVLVADNNNVLHLLNYDPDDPQSINGTKLLTKASFELNSTISCLRSLPLIDIEESVQTDALTNIAVPPPLPPNTTSNYFQVIGSTQDGSFFNVFPINEAAYRRMYILQQQLIDKEFHYCGLNPRLNRIGSIKLQNNETNTKPILDYDLIRRFTKLSDDRKRNLANKVSGKGIYQDIWKDIIRFEHTLNDL.

Residues 161–182 (DEDEEEEEEEDEEDEDEGEENI) show a composition bias toward acidic residues. Disordered stretches follow at residues 161–210 (DEDE…TTNQ), 435–488 (QVRY…QKTI), and 722–760 (NTSS…PPPK). Basic and acidic residues-rich tracts occupy residues 183–204 (DDTK…EDKN) and 437–461 (RYRD…KEDN). Residues 462 to 483 (KDDDDNDDDDEDDLYKEEEEEE) show a composition bias toward acidic residues.

It belongs to the CFT1 family.

Its subcellular location is the nucleus. In terms of biological role, RNA-binding component of the cleavage and polyadenylation factor (CPF) complex, which plays a key role in polyadenylation-dependent pre-mRNA 3'-end formation and cooperates with cleavage factors including the CFIA complex and NAB4/CFIB. Involved in poly(A) site recognition. May be involved in coupling transcription termination and mRNA 3'-end formation. The sequence is that of Protein CFT1 (CFT1) from Candida albicans (strain SC5314 / ATCC MYA-2876) (Yeast).